We begin with the raw amino-acid sequence, 714 residues long: Fatty acid oxidation complex subunit alpha (714 aa).

Residues 1–190 (MEMASAFTLN…KLGLVDDVVP (190 aa)) form an enoyl-CoA hydratase region. The 3-hydroxyacyl-CoA dehydrogenase stretch occupies residues 306 to 714 (APLNSVGILG…FWKTTATDLQ (409 aa)).

This sequence in the N-terminal section; belongs to the enoyl-CoA hydratase/isomerase family. It in the central section; belongs to the 3-hydroxyacyl-CoA dehydrogenase family. Heterotetramer of two alpha chains (FadJ) and two beta chains (FadI).

Its subcellular location is the cytoplasm. It carries out the reaction a (3S)-3-hydroxyacyl-CoA = a (2E)-enoyl-CoA + H2O. The catalysed reaction is a 4-saturated-(3S)-3-hydroxyacyl-CoA = a (3E)-enoyl-CoA + H2O. It catalyses the reaction a (3S)-3-hydroxyacyl-CoA + NAD(+) = a 3-oxoacyl-CoA + NADH + H(+). The enzyme catalyses (3S)-3-hydroxybutanoyl-CoA = (3R)-3-hydroxybutanoyl-CoA. The protein operates within lipid metabolism; fatty acid beta-oxidation. Catalyzes the formation of a hydroxyacyl-CoA by addition of water on enoyl-CoA. Also exhibits 3-hydroxyacyl-CoA epimerase and 3-hydroxyacyl-CoA dehydrogenase activities. This Escherichia coli O45:K1 (strain S88 / ExPEC) protein is Fatty acid oxidation complex subunit alpha.